The primary structure comprises 164 residues: SsrA-binding protein (164 aa).

Belongs to the SmpB family.

The protein resides in the cytoplasm. Functionally, required for rescue of stalled ribosomes mediated by trans-translation. Binds to transfer-messenger RNA (tmRNA), required for stable association of tmRNA with ribosomes. tmRNA and SmpB together mimic tRNA shape, replacing the anticodon stem-loop with SmpB. tmRNA is encoded by the ssrA gene; the 2 termini fold to resemble tRNA(Ala) and it encodes a 'tag peptide', a short internal open reading frame. During trans-translation Ala-aminoacylated tmRNA acts like a tRNA, entering the A-site of stalled ribosomes, displacing the stalled mRNA. The ribosome then switches to translate the ORF on the tmRNA; the nascent peptide is terminated with the 'tag peptide' encoded by the tmRNA and targeted for degradation. The ribosome is freed to recommence translation, which seems to be the essential function of trans-translation. The chain is SsrA-binding protein from Shewanella woodyi (strain ATCC 51908 / MS32).